We begin with the raw amino-acid sequence, 360 residues long: A-type ATP synthase subunit C (360 aa).

A disordered region spans residues 1–23; sequence MRLLERLWGKKPSRKSDKKKKGT. Basic residues predominate over residues 9–22; the sequence is GKKPSRKSDKKKKG.

The protein belongs to the V-ATPase V0D/AC39 subunit family. In terms of assembly, has multiple subunits with at least A(3), B(3), C, D, E, F, H, I and proteolipid K(x).

The protein localises to the cell membrane. Component of the A-type ATP synthase that produces ATP from ADP in the presence of a proton gradient across the membrane. This is A-type ATP synthase subunit C from Methanosarcina acetivorans (strain ATCC 35395 / DSM 2834 / JCM 12185 / C2A).